Consider the following 270-residue polypeptide: Type III pantothenate kinase (270 aa).

11 to 18 (DAGNSRIK) is an ATP binding site. Substrate is bound by residues Y96 and 103–106 (GSDR). Residue D105 is the Proton acceptor of the active site. Residue T129 participates in ATP binding. A substrate-binding site is contributed by T195.

It belongs to the type III pantothenate kinase family. As to quaternary structure, homodimer. Requires NH4(+) as cofactor. K(+) serves as cofactor.

The protein resides in the cytoplasm. It catalyses the reaction (R)-pantothenate + ATP = (R)-4'-phosphopantothenate + ADP + H(+). The protein operates within cofactor biosynthesis; coenzyme A biosynthesis; CoA from (R)-pantothenate: step 1/5. In terms of biological role, catalyzes the phosphorylation of pantothenate (Pan), the first step in CoA biosynthesis. This Paraburkholderia xenovorans (strain LB400) protein is Type III pantothenate kinase.